Here is a 154-residue protein sequence, read N- to C-terminus: Egg-lysin (154 aa).

A signal peptide spans 1-18 (MKLLVLCIFAMMATLAMS).

In terms of assembly, homodimer. Sperm.

In terms of biological role, dissolves the egg vitelline layer nonenzymatically during fertilization. It creates a hole of about 3 mu-m in diameter through which the sperm pass. This Haliotis walallensis (Flat abalone) protein is Egg-lysin.